Consider the following 62-residue polypeptide: Small ribosomal subunit protein eS17 (62 aa).

Belongs to the eukaryotic ribosomal protein eS17 family.

The polypeptide is Small ribosomal subunit protein eS17 (Methanocaldococcus jannaschii (strain ATCC 43067 / DSM 2661 / JAL-1 / JCM 10045 / NBRC 100440) (Methanococcus jannaschii)).